We begin with the raw amino-acid sequence, 123 residues long: Small ribosomal subunit protein uS12c (123 aa).

It belongs to the universal ribosomal protein uS12 family. Part of the 30S ribosomal subunit.

The protein resides in the plastid. It is found in the chloroplast. Its function is as follows. With S4 and S5 plays an important role in translational accuracy. Located at the interface of the 30S and 50S subunits. This is Small ribosomal subunit protein uS12c (rps12) from Chlorella vulgaris (Green alga).